Here is a 196-residue protein sequence, read N- to C-terminus: dTTP/UTP pyrophosphatase (196 aa).

D75 serves as the catalytic Proton acceptor.

Belongs to the Maf family. YhdE subfamily. The cofactor is a divalent metal cation.

It is found in the cytoplasm. The catalysed reaction is dTTP + H2O = dTMP + diphosphate + H(+). The enzyme catalyses UTP + H2O = UMP + diphosphate + H(+). Nucleoside triphosphate pyrophosphatase that hydrolyzes dTTP and UTP. May have a dual role in cell division arrest and in preventing the incorporation of modified nucleotides into cellular nucleic acids. This is dTTP/UTP pyrophosphatase from Wolbachia pipientis subsp. Culex pipiens (strain wPip).